The following is a 326-amino-acid chain: Alkanal monooxygenase beta chain (326 aa).

This sequence belongs to the bacterial luciferase oxidoreductase family. As to quaternary structure, heterodimer of an alpha and a beta chain.

The enzyme catalyses a long-chain fatty aldehyde + FMNH2 + O2 = a long-chain fatty acid + hnu + FMN + H2O + 2 H(+). In terms of biological role, light-emitting reaction in luminous bacteria. The specific role of the beta subunit is unknown, but it is absolutely required for bioluminescence activity. The polypeptide is Alkanal monooxygenase beta chain (luxB) (Photobacterium leiognathi).